Here is a 7388-residue protein sequence, read N- to C-terminus: Microtubule-actin cross-linking factor 1, isoforms 1/2/3/4/5 (7388 aa).

The tract at residues 1–47 (MSSSDEETLSERSCRSERSCRSERSYRSERSGSLSPCPPGDTLPWNL) is disordered. The actin-binding stretch occupies residues 1-295 (MSSSDEETLS…VITYVSSIYD (295 aa)). Residue Ser4 is modified to Phosphoserine. A compositionally biased stretch (basic and acidic residues) spans 9–30 (LSERSCRSERSCRSERSYRSER). Ser35 and Ser57 each carry phosphoserine. 2 consecutive Calponin-homology (CH) domains span residues 78–181 (RVQK…LHFQ) and 194–298 (MSAK…DAFP). LRR repeat units follow at residues 148–171 (QRQV…LTLG) and 240–264 (LVDM…VAER). Phosphoserine is present on Ser280. 2 LRR repeats span residues 377–399 (LYKL…YHPN) and 441–464 (LNCE…LESG). Ser814 is subject to Phosphoserine. An SH3 domain is found at 868 to 925 (KNTISVKAVCDYRQIEITICKNDECVLEDNSQRTKWKVISPTGNEAMVPSVCFLIPPP). An LRR 5 repeat occupies 1050 to 1073 (ISELKNIRLRLEEYEQRVVKRIQS). Ser1122 carries the post-translational modification Phosphoserine. LRR repeat units lie at residues 1128–1154 (VPTL…VYLN), 1187–1210 (LADL…VKDK), and 1257–1282 (HRVI…DYRA). A phosphoserine mark is found at Ser1367 and Ser1376. Plectin repeat units follow at residues 1577–1621 (LVLL…RELQ), 1654–1696 (LKIL…VLES), 1769–1809 (RLLE…CAIL), 1811–1848 (RQLQ…VILE), and 1855–1886 (GLLW…KILS). Phosphoserine is present on residues Ser2006 and Ser2051. The disordered stretch occupies residues 2051–2085 (SQNKEYPDREDCTTEKGKKTTVETEDSSVENPEQD). Basic and acidic residues predominate over residues 2055-2072 (EYPDREDCTTEKGKKTTV). The residue at position 2077 (Ser2077) is a Phosphoserine. Plectin repeat units follow at residues 2290–2332 (LNVL…KLME), 2367–2410 (NVLM…LERQ), 2411–2437 (VVTG…GLVD), 2501–2543 (RLLT…LKRV), 2581–2612 (EVQA…LTNE), and 2686–2730 (LKVL…ASHQ). Disordered stretches follow at residues 3013–3034 (EHDS…GKEA) and 3104–3174 (SEPF…NECK). Residues 3115–3124 (EGLHYQESDG) show a composition bias toward basic and acidic residues. Ser3122 is subject to Phosphoserine. Residues 3129–3158 (TGPSQISKTDKSFQGTTRQETNYQDSWVTS) are compositionally biased toward polar residues. 2 LRR repeats span residues 3239-3262 (LTGE…SIED) and 3264-3283 (VTQR…LFKG). Residues 3321–3332 (EKTPQEKLRESP) are compositionally biased toward basic and acidic residues. A disordered region spans residues 3321-3350 (EKTPQEKLRESPGSEQTPFMTAPEGKGNGG). Ser3331 bears the Phosphoserine mark. LRR repeat units follow at residues 3646–3669 (QQDL…IQNR) and 3696–3720 (LTAL…TRVA). 2 Spectrin repeats span residues 3883 to 3957 (ELQK…NSFK) and 4000 to 4108 (QYHQ…SLLQ). At Ser3927 the chain carries Phosphoserine. The LRR 13 repeat unit spans residues 3936–3958 (KGDLRFVTISGQKVLDMENSFKE). LRR repeat units lie at residues 4125–4150 (LQSI…VIQE) and 4261–4287 (IQEL…ELSS). The stretch at 4466-4574 (RMEEVHKEAN…TVARQRQLEE (109 aa)) is one Spectrin 3 repeat. Residues Ser4495, Ser4496, and Ser4521 each carry the phosphoserine modification. LRR repeat units lie at residues 4511-4534 (KAFL…LAGL), 4601-4624 (GVLG…QFML), and 4769-4792 (KKRL…RINR). 2 Spectrin repeats span residues 4800-4904 (TQQF…SRLK) and 4909-5012 (KAQK…SLEE). A phosphoserine mark is found at Ser4836 and Ser4962. LRR repeat units follow at residues 5051 to 5076 (NKNL…YLRN), 5172 to 5194 (NKIH…MLEE), and 5281 to 5304 (KEQV…LIQS). 3 Spectrin repeats span residues 5236 to 5341 (EDFY…QLQE), 5348 to 5450 (KFQD…QLED), and 5455 to 5557 (AKQF…LRTL). The residue at position 5435 (Thr5435) is a Phosphothreonine. Positions 5583–5603 (EELATSGGQSPTGEQIPQFQQ) are disordered. Residues 5588-5603 (SGGQSPTGEQIPQFQQ) are compositionally biased toward polar residues. LRR repeat units follow at residues 5695–5719 (MALG…AFSI) and 5804–5828 (AQLP…QLRE). 9 Spectrin repeats span residues 5783 to 5885 (NQFW…ALDE), 6005 to 6110 (LAEK…KLED), 6115 to 6219 (AVQY…HKLE), 6225 to 6328 (LGQF…QQLQ), 6333 to 6439 (QAQG…KLEE), 6443 to 6547 (LATE…RSLD), 6552 to 6658 (RAKQ…KLEE), 6665 to 6766 (QFMD…RLEQ), and 6771 to 6874 (AEVF…QRLE). Residues Ser5808 and Ser6032 each carry the phosphoserine modification. Lys6210 bears the N6-acetyllysine mark. One copy of the LRR 24 repeat lies at 6496–6519 (RDQIIELDQTGNQLKFLSQKQDVV). The segment at 6951–6981 (PTHAPFIEKSRSGGRKSLSQPTPPPMPILSQ) is disordered. A Phosphoserine modification is found at Ser6967. EF-hand domains lie at 7041 to 7076 (HKKS…SKFP) and 7077 to 7112 (TTKL…NKDA). Asp7054, Asp7056, Asp7058, Lys7060, Glu7065, Asp7090, Asp7092, Asp7094, Tyr7096, and Glu7101 together coordinate Ca(2+). One can recognise a GAR domain in the interval 7117–7189 (TDADKIEDEV…EFLVKNDPCR (73 aa)). Positions 7117–7388 (TDADKIEDEV…ASPRTPGPKR (272 aa)) are C-terminal tail. The tract at residues 7205 to 7388 (PEGASQGMTP…ASPRTPGPKR (184 aa)) is disordered. A compositionally biased stretch (low complexity) spans 7225-7259 (SSRAASPTRSSSSASQSNHSCTSMPSSPATPASGT). Phosphothreonine is present on Thr7254. The span at 7275–7299 (TFHSSRTSLAGDTSNSSSPASTGAK) shows a compositional bias: polar residues. A phosphoserine mark is found at Ser7279 and Ser7292. Low complexity predominate over residues 7310 to 7324 (SRPGSRAGSRAGSRA). A 4 X 4 AA tandem repeats of [GS]-S-R-[AR] region spans residues 7313–7328 (GSRAGSRAGSRASSRR). 2 positions are modified to phosphoserine: Ser7330 and Ser7333. Polar residues predominate over residues 7339–7361 (ETQSACSDTSESSAAGGQGNSRR).

Belongs to the plakin or cytolinker family. Isoform 2: Interacts with MAPRE1, CLASP1, CLASP2, AXIN1 and LRP6. Isoform 2: Found in a complex composed of MACF1, APC, AXIN1, CTNNB1 and GSK3B. Isoform 2: Interacts with GOLGA4. Isoform 2: Interacts with CAMSAP3. Post-translationally, phosphorylated on serine residues in the C-terminal tail by GSK3B. Phosphorylation inhibits microtubule-binding and this plays a critical role in bulge stem cell migration and skin wound repair. Wnt-signaling can repress phosphorylation. In terms of tissue distribution, isoform 2: Ubiquitously expressed. Isoform 1: Expressed in cell lines NCI-H460, A-549 and HaCaT. Isoform 4: Expressed in heart, lung, pituitary and placenta, not found in brain, kidney, liver, pancreas or skeletal muscle.

It localises to the cytoplasm. It is found in the cytoskeleton. The protein resides in the golgi apparatus. The protein localises to the cell membrane. Its subcellular location is the cell projection. It localises to the ruffle membrane. Functionally, F-actin-binding protein which plays a role in cross-linking actin to other cytoskeletal proteins and also binds to microtubules. Plays an important role in ERBB2-dependent stabilization of microtubules at the cell cortex. Acts as a positive regulator of Wnt receptor signaling pathway and is involved in the translocation of AXIN1 and its associated complex (composed of APC, CTNNB1 and GSK3B) from the cytoplasm to the cell membrane. Has actin-regulated ATPase activity and is essential for controlling focal adhesions (FAs) assembly and dynamics. Interaction with CAMSAP3 at the minus ends of non-centrosomal microtubules tethers microtubules minus-ends to actin filaments, regulating focal adhesion size and cell migration. May play role in delivery of transport vesicles containing GPI-linked proteins from the trans-Golgi network through its interaction with GOLGA4. Plays a key role in wound healing and epidermal cell migration. Required for efficient upward migration of bulge cells in response to wounding and this function is primarily rooted in its ability to coordinate microtubule dynamics and polarize hair follicle stem cells. As a regulator of actin and microtubule arrangement and stabilization, it plays an essential role in neurite outgrowth, branching and spine formation during brain development. The chain is Microtubule-actin cross-linking factor 1, isoforms 1/2/3/4/5 from Homo sapiens (Human).